We begin with the raw amino-acid sequence, 1383 residues long: DNA-directed RNA polymerase subunit beta (1383 aa).

This sequence belongs to the RNA polymerase beta chain family. In terms of assembly, the RNAP catalytic core consists of 2 alpha, 1 beta, 1 beta' and 1 omega subunit. When a sigma factor is associated with the core the holoenzyme is formed, which can initiate transcription.

It carries out the reaction RNA(n) + a ribonucleoside 5'-triphosphate = RNA(n+1) + diphosphate. Its function is as follows. DNA-dependent RNA polymerase catalyzes the transcription of DNA into RNA using the four ribonucleoside triphosphates as substrates. The protein is DNA-directed RNA polymerase subunit beta of Bartonella tribocorum (strain CIP 105476 / IBS 506).